A 296-amino-acid chain; its full sequence is 110 kDa antigen (296 aa).

The stretch at 132–143 is one 1; approximate repeat; it reads EETQKTVEPEQI. A 13.5 X 12 AA approximate tandem repeats of E-E-T-Q-K-T-V-E-P-E-Q-T region spans residues 132–296; that stretch reads EETQKTVEPE…TQETQNTVEP (165 aa). Positions 133–296 are disordered; that stretch reads ETQKTVEPEQ…TQETQNTVEP (164 aa). The 2; approximate repeat unit spans residues 144–155; the sequence is EETQNTVEPEQT. Repeat 3 spans residues 156 to 167; the sequence is EETQKTVEPEQT. A 4; approximate repeat occupies 168-179; it reads EETQNTVEPEQI. Copy 5 of the repeat occupies 180–191; that stretch reads EETQKTVEPEQT. The segment covering 181 to 271 has biased composition (basic and acidic residues); sequence ETQKTVEPEQ…QTEETQKTVE (91 aa). The 6; approximate repeat unit spans residues 192–203; the sequence is EEAQKTVEPEQT. A run of 6 repeats spans residues 204 to 215, 216 to 227, 228 to 239, 240 to 251, 252 to 263, and 264 to 275. The 13; approximate repeat unit spans residues 276–287; that stretch reads EETQNTVEPEPT. Residues 277–296 show a composition bias toward polar residues; sequence ETQNTVEPEPTQETQNTVEP. Residues 288-293 form a 14; truncated repeat; it reads QETQNT.

This chain is 110 kDa antigen, found in Plasmodium knowlesi.